Here is a 1088-residue protein sequence, read N- to C-terminus: PAN2-PAN3 deadenylation complex catalytic subunit pan2 (1088 aa).

WD repeat units lie at residues valine 16–phenylalanine 56, histidine 136–lysine 175, alanine 178–proline 224, and proline 270–aspartate 309. The interval aspartate 309 to isoleucine 443 is linker. The USP domain maps to isoleucine 443–leucine 814. An Exonuclease domain is found at valine 860–tyrosine 1033. A divalent metal cation is bound by residues aspartate 863, glutamate 865, aspartate 972, and aspartate 1025.

The protein belongs to the peptidase C19 family. PAN2 subfamily. In terms of assembly, forms a heterotrimer with an asymmetric homodimer of the regulatory subunit ppk26/pan3 to form the poly(A)-nuclease (PAN) deadenylation complex. The cofactor is a divalent metal cation.

It localises to the cytoplasm. The catalysed reaction is Exonucleolytic cleavage of poly(A) to 5'-AMP.. Its activity is regulated as follows. Positively regulated by the regulatory subunit ppk26/pan3. Its function is as follows. Catalytic subunit of the poly(A)-nuclease (PAN) deadenylation complex, one of two cytoplasmic mRNA deadenylases involved in mRNA turnover. PAN specifically shortens poly(A) tails of RNA and the activity is stimulated by poly(A)-binding protein pab1. PAN deadenylation is followed by rapid degradation of the shortened mRNA tails by the CCR4-NOT complex. Deadenylated mRNAs are then degraded by two alternative mechanisms, namely exosome-mediated 3'-5' exonucleolytic degradation, or deadenylation-dependent mRNA decaping and subsequent 5'-3' exonucleolytic degradation by xrn1. May also be involved in post-transcriptional maturation of mRNA poly(A) tails. The chain is PAN2-PAN3 deadenylation complex catalytic subunit pan2 from Schizosaccharomyces pombe (strain 972 / ATCC 24843) (Fission yeast).